A 204-amino-acid chain; its full sequence is Pyrrolidone-carboxylate peptidase (204 aa).

Active-site residues include glutamate 78, cysteine 141, and histidine 165.

Belongs to the peptidase C15 family. In terms of assembly, homotetramer.

The protein resides in the cytoplasm. It carries out the reaction Release of an N-terminal pyroglutamyl group from a polypeptide, the second amino acid generally not being Pro.. Its function is as follows. Removes 5-oxoproline from various penultimate amino acid residues except L-proline. This chain is Pyrrolidone-carboxylate peptidase, found in Levilactobacillus brevis (strain ATCC 367 / BCRC 12310 / CIP 105137 / JCM 1170 / LMG 11437 / NCIMB 947 / NCTC 947) (Lactobacillus brevis).